The chain runs to 576 residues: Colicin-E7 (576 aa).

Disordered stretches follow at residues 1 to 75 (MSGG…GGGS), 421 to 478 (SSAL…PVPD), and 506 to 557 (DPEL…GVYD). Gly residues predominate over residues 19-35 (NINGGPTGLGGNGGASD). The span at 36–45 (GSGWSSENNP) shows a compositional bias: low complexity. The segment covering 46-75 (WGGGSGSGVHWGGGSGHGNGGGNSNSGGGS) has biased composition (gly residues). Basic and acidic residues-rich tracts occupy residues 424 to 447 (LERR…ESKR) and 535 to 548 (SGKR…HEKP). Positions 544, 569, and 573 each coordinate Zn(2+).

Belongs to the colicin/pyosin nuclease family.

Its function is as follows. This plasmid-coded bactericidal protein is an endonuclease active on both single- and double-stranded DNA but with undefined specificity. Colicins are polypeptide toxins produced by and active against E.coli and closely related bacteria. In Escherichia coli, this protein is Colicin-E7 (colE7).